Here is a 138-residue protein sequence, read N- to C-terminus: Glutathione S-transferase Mu 5 (138 aa).

Ser1 is modified (phosphoserine). A GST N-terminal domain is found at Ser1–Arg71. Glutathione is bound by residues Tyr6–Trp7, Trp39–Lys43, Asn52–Leu53, and Gln65–Ser66. One can recognise a GST C-terminal domain in the interval Ile72–Ile135.

This sequence belongs to the GST superfamily. Mu family. In terms of assembly, homodimer.

The protein localises to the cytoplasm. It catalyses the reaction RX + glutathione = an S-substituted glutathione + a halide anion + H(+). Conjugation of reduced glutathione to a wide number of exogenous and endogenous hydrophobic electrophiles. The chain is Glutathione S-transferase Mu 5 from Mesocricetus auratus (Golden hamster).